Consider the following 195-residue polypeptide: MDSEVSNGSGLGAEHITDLLVFGFLQSSGCTRQELEVLGRELPVQAYWEADLEDELQTDGSQASRSFNQGRIEPDSESQEEIIHNIARHLAQIGDEMDHNIQPTLVRQLAAQFMNGSLSEEDKRNCLAKALDEVKTAFPRDMENDKAMLIMTMLLAKKVASHAPSLLRDVFHTTVNFINQNLFSYVRNLVRNEMD.

M1 carries the post-translational modification N-acetylmethionine. The span at 58 to 69 (TDGSQASRSFNQ) shows a compositional bias: polar residues. The interval 58–77 (TDGSQASRSFNQGRIEPDSE) is disordered. S78 is subject to Phosphoserine. A BH3 motif is present at residues 87 to 100 (ARHLAQIGDEMDHN).

Forms heterodimers either with the pro-apoptotic protein BAX or the anti-apoptotic protein BCL2. Interacts with PLEKHN1. In terms of assembly, interacts with ITCH. Interacts with MTCH2. Post-translationally, TNF-alpha induces caspase-mediated cleavage into a major p15 and minor p13 and p11 products. Cleaved by CASP6 into a major p15 and minor p13 products, leading to release of cytochrome c and subsequent nonalcoholic steatohepatitis. Ubiquitinated by ITCH; ubiquitination results in proteasome-dependent degradation.

The protein resides in the cytoplasm. The protein localises to the mitochondrion membrane. It is found in the mitochondrion outer membrane. Induces caspases and apoptosis. Counters the protective effect of BCL2. Functionally, induces caspase activation and apoptosis. Allows the release of cytochrome c. The chain is BH3-interacting domain death agonist (Bid) from Mus musculus (Mouse).